Reading from the N-terminus, the 301-residue chain is CRISPR-associated endonuclease Cas1 (301 aa).

The Mn(2+) site is built by Glu-133, His-200, and Asp-213.

This sequence belongs to the CRISPR-associated endonuclease Cas1 family. In terms of assembly, homodimer, forms a heterotetramer with a Cas2 homodimer. Mg(2+) serves as cofactor. It depends on Mn(2+) as a cofactor.

CRISPR (clustered regularly interspaced short palindromic repeat), is an adaptive immune system that provides protection against mobile genetic elements (viruses, transposable elements and conjugative plasmids). CRISPR clusters contain spacers, sequences complementary to antecedent mobile elements, and target invading nucleic acids. CRISPR clusters are transcribed and processed into CRISPR RNA (crRNA). Acts as a dsDNA endonuclease. Involved in the integration of spacer DNA into the CRISPR cassette. This Clostridium sp. (strain SY8519) protein is CRISPR-associated endonuclease Cas1.